Here is a 303-residue protein sequence, read N- to C-terminus: uncharacterized protein (303 aa).

The HTH araC/xylS-type domain occupies 183–281 (KDILFYLNNN…GCSPSDYRRQ (99 aa)). 2 DNA-binding regions (H-T-H motif) span residues 200–221 (EQLS…TKEY) and 248–271 (QAEI…LRHV).

This is an uncharacterized protein from Escherichia coli (strain K12).